The following is a 281-amino-acid chain: MSIAIVTDSTSDLTPEHLAALGVTGVPLYVLFEGQLYQDGVQLSARQLVEGVRAGKAIPSTSQPSPAEFAQAYAQALEHADEVLSLHISGQLSGTVGSARLAAQEFGGRVTVVDTHTVTLGLGLQVLRAAELVRAGQSVPQIVQTLERVYPQADLRFTVDTLDFLRLNGRIGGASALLGGLLNIKPLLVVRGGRVDAGGRVRGQKKALADLAEHVRRYVSQHGGARVAFLATVGGEEDRAAVRAQLSDLHFQDMGDHEIGAVVTVHAGPGAVGVALEPLSA.

Residues 3–278 form the DegV domain; that stretch reads IAIVTDSTSD…PGAVGVALEP (276 aa). Hexadecanoate-binding residues include Thr-61 and Ser-93.

Its function is as follows. May bind long-chain fatty acids, such as palmitate, and may play a role in lipid transport or fatty acid metabolism. In Deinococcus radiodurans (strain ATCC 13939 / DSM 20539 / JCM 16871 / CCUG 27074 / LMG 4051 / NBRC 15346 / NCIMB 9279 / VKM B-1422 / R1), this protein is DegV domain-containing protein DR_1986.